Here is a 68-residue protein sequence, read N- to C-terminus: Large ribosomal subunit protein uL29 (68 aa).

The protein belongs to the universal ribosomal protein uL29 family.

The chain is Large ribosomal subunit protein uL29 from Streptococcus agalactiae serotype Ia (strain ATCC 27591 / A909 / CDC SS700).